The following is a 199-amino-acid chain: Thymidylate kinase (199 aa).

Residue 7-14 (GTEGVGKT) participates in ATP binding.

This sequence belongs to the thymidylate kinase family.

It catalyses the reaction dTMP + ATP = dTDP + ADP. In terms of biological role, phosphorylation of dTMP to form dTDP in both de novo and salvage pathways of dTTP synthesis. The chain is Thymidylate kinase from Acinetobacter baumannii (strain ACICU).